A 178-amino-acid polypeptide reads, in one-letter code: Arginine repressor (178 aa).

The tract at residues 1 to 21 is disordered; it reads MSQAQENEHAGPAVPQTRTAR.

The protein belongs to the ArgR family.

The protein localises to the cytoplasm. It participates in amino-acid biosynthesis; L-arginine biosynthesis [regulation]. Its function is as follows. Regulates arginine biosynthesis genes. This chain is Arginine repressor, found in Streptomyces avermitilis (strain ATCC 31267 / DSM 46492 / JCM 5070 / NBRC 14893 / NCIMB 12804 / NRRL 8165 / MA-4680).